A 365-amino-acid polypeptide reads, in one-letter code: UDP-N-acetylglucosamine--N-acetylmuramyl-(pentapeptide) pyrophosphoryl-undecaprenol N-acetylglucosamine transferase (365 aa).

Residues 17-19, N129, R167, S194, I250, 269-274, and Q295 contribute to the UDP-N-acetyl-alpha-D-glucosamine site; these read TGG and ALTVSE.

Belongs to the glycosyltransferase 28 family. MurG subfamily.

The protein localises to the cell inner membrane. It carries out the reaction di-trans,octa-cis-undecaprenyl diphospho-N-acetyl-alpha-D-muramoyl-L-alanyl-D-glutamyl-meso-2,6-diaminopimeloyl-D-alanyl-D-alanine + UDP-N-acetyl-alpha-D-glucosamine = di-trans,octa-cis-undecaprenyl diphospho-[N-acetyl-alpha-D-glucosaminyl-(1-&gt;4)]-N-acetyl-alpha-D-muramoyl-L-alanyl-D-glutamyl-meso-2,6-diaminopimeloyl-D-alanyl-D-alanine + UDP + H(+). Its pathway is cell wall biogenesis; peptidoglycan biosynthesis. Cell wall formation. Catalyzes the transfer of a GlcNAc subunit on undecaprenyl-pyrophosphoryl-MurNAc-pentapeptide (lipid intermediate I) to form undecaprenyl-pyrophosphoryl-MurNAc-(pentapeptide)GlcNAc (lipid intermediate II). This is UDP-N-acetylglucosamine--N-acetylmuramyl-(pentapeptide) pyrophosphoryl-undecaprenol N-acetylglucosamine transferase from Shewanella woodyi (strain ATCC 51908 / MS32).